The sequence spans 263 residues: 3-methyl-2-oxobutanoate hydroxymethyltransferase (263 aa).

Mg(2+) contacts are provided by aspartate 45 and aspartate 84. Residues 45–46, aspartate 84, and lysine 112 contribute to the 3-methyl-2-oxobutanoate site; that span reads DS. Glutamate 114 serves as a coordination point for Mg(2+). Catalysis depends on glutamate 181, which acts as the Proton acceptor.

Belongs to the PanB family. Homodecamer; pentamer of dimers. It depends on Mg(2+) as a cofactor.

The protein localises to the cytoplasm. The enzyme catalyses 3-methyl-2-oxobutanoate + (6R)-5,10-methylene-5,6,7,8-tetrahydrofolate + H2O = 2-dehydropantoate + (6S)-5,6,7,8-tetrahydrofolate. The protein operates within cofactor biosynthesis; (R)-pantothenate biosynthesis; (R)-pantoate from 3-methyl-2-oxobutanoate: step 1/2. In terms of biological role, catalyzes the reversible reaction in which hydroxymethyl group from 5,10-methylenetetrahydrofolate is transferred onto alpha-ketoisovalerate to form ketopantoate. The sequence is that of 3-methyl-2-oxobutanoate hydroxymethyltransferase from Buchnera aphidicola subsp. Acyrthosiphon pisum (strain APS) (Acyrthosiphon pisum symbiotic bacterium).